We begin with the raw amino-acid sequence, 34 residues long: Non-cysteinic peptide Bs 10 (34 aa).

The interval Val-1–Gly-34 is disordered. The span at Ile-14–Arg-23 shows a compositional bias: basic residues. A compositionally biased stretch (basic and acidic residues) spans Lys-24 to Gly-34.

As to expression, expressed by the venom gland.

Its subcellular location is the secreted. The sequence is that of Non-cysteinic peptide Bs 10 from Hottentotta tamulus sindicus (Scorpion).